The primary structure comprises 260 residues: Hydroxyacylglutathione hydrolase (260 aa).

Histidine 61, histidine 63, aspartate 65, histidine 66, histidine 119, aspartate 138, and histidine 176 together coordinate Zn(2+).

It belongs to the metallo-beta-lactamase superfamily. Glyoxalase II family. Monomer. Zn(2+) serves as cofactor.

It catalyses the reaction an S-(2-hydroxyacyl)glutathione + H2O = a 2-hydroxy carboxylate + glutathione + H(+). It participates in secondary metabolite metabolism; methylglyoxal degradation; (R)-lactate from methylglyoxal: step 2/2. Its function is as follows. Thiolesterase that catalyzes the hydrolysis of S-D-lactoyl-glutathione to form glutathione and D-lactic acid. This is Hydroxyacylglutathione hydrolase from Brucella suis (strain ATCC 23445 / NCTC 10510).